A 421-amino-acid polypeptide reads, in one-letter code: Serine hydroxymethyltransferase (421 aa).

(6S)-5,6,7,8-tetrahydrofolate is bound by residues Leu-121 and Gly-125–Leu-127. Residue Lys-229 is modified to N6-(pyridoxal phosphate)lysine.

The protein belongs to the SHMT family. As to quaternary structure, homodimer. Pyridoxal 5'-phosphate is required as a cofactor.

It localises to the cytoplasm. The catalysed reaction is (6R)-5,10-methylene-5,6,7,8-tetrahydrofolate + glycine + H2O = (6S)-5,6,7,8-tetrahydrofolate + L-serine. It functions in the pathway one-carbon metabolism; tetrahydrofolate interconversion. The protein operates within amino-acid biosynthesis; glycine biosynthesis; glycine from L-serine: step 1/1. Catalyzes the reversible interconversion of serine and glycine with tetrahydrofolate (THF) serving as the one-carbon carrier. This reaction serves as the major source of one-carbon groups required for the biosynthesis of purines, thymidylate, methionine, and other important biomolecules. Also exhibits THF-independent aldolase activity toward beta-hydroxyamino acids, producing glycine and aldehydes, via a retro-aldol mechanism. This Haemophilus influenzae (strain 86-028NP) protein is Serine hydroxymethyltransferase.